The following is a 119-amino-acid chain: Beta-2-microglobulin (119 aa).

The N-terminal stretch at 1–20 (MARSVAVVFLMLLSVVCLDA) is a signal peptide. Residues 25 to 114 (PQVQVYTRHP…TTLKEPKVVT (90 aa)) enclose the Ig-like C1-type domain. C45 and C100 are joined by a disulfide.

It belongs to the beta-2-microglobulin family. Heterodimer of an alpha chain and a beta chain. Beta-2-microglobulin is the beta-chain of major histocompatibility complex class I molecules.

It localises to the secreted. Functionally, component of the class I major histocompatibility complex (MHC). Involved in the presentation of peptide antigens to the immune system. This is Beta-2-microglobulin (B2M) from Cricetulus griseus (Chinese hamster).